The sequence spans 139 residues: Small ribosomal subunit protein uS12 (139 aa).

The tract at residues 12 to 55 (RVDKVKKSDSPALNKGYNSFKKSQTDVSSPQKRGVCTRVGTMTP) is disordered. The segment covering 27-42 (GYNSFKKSQTDVSSPQ) has biased composition (polar residues). 3-methylthioaspartic acid is present on D102. A disordered region spans residues 119 to 139 (GVQNRMQGRSKYGTKKPKDKK). The segment covering 130–139 (YGTKKPKDKK) has biased composition (basic residues).

This sequence belongs to the universal ribosomal protein uS12 family. In terms of assembly, part of the 30S ribosomal subunit. Contacts proteins S8 and S17. May interact with IF1 in the 30S initiation complex.

Functionally, with S4 and S5 plays an important role in translational accuracy. Interacts with and stabilizes bases of the 16S rRNA that are involved in tRNA selection in the A site and with the mRNA backbone. Located at the interface of the 30S and 50S subunits, it traverses the body of the 30S subunit contacting proteins on the other side and probably holding the rRNA structure together. The combined cluster of proteins S8, S12 and S17 appears to hold together the shoulder and platform of the 30S subunit. This chain is Small ribosomal subunit protein uS12, found in Shouchella clausii (strain KSM-K16) (Alkalihalobacillus clausii).